A 22-amino-acid chain; its full sequence is Unknown protein from spot 168 of 2D-PAGE of etiolated coleoptile (22 aa).

This chain is Unknown protein from spot 168 of 2D-PAGE of etiolated coleoptile, found in Zea mays (Maize).